The primary structure comprises 417 residues: Transmembrane protease serine 11G (417 aa).

Residues 1-22 (MYQPGILGRRKRVCKPWTVALT) are Cytoplasmic-facing. The helical; Signal-anchor for type II membrane protein transmembrane segment at 23–43 (TTAALLALAVLIGLLVYFLVY) threads the bilayer. The Extracellular portion of the chain corresponds to 44-417 (EEKTHYYQAS…RNWIKSKTNI (374 aa)). The SEA domain maps to 46 to 165 (KTHYYQASFW…PYLREMNAAQ (120 aa)). Residues 186–416 (IADGKPAGSN…YRNWIKSKTN (231 aa)) enclose the Peptidase S1 domain. Cysteines 211 and 227 form a disulfide. Catalysis depends on charge relay system residues histidine 226 and aspartate 271. Cystine bridges form between cysteine 336–cysteine 352 and cysteine 363–cysteine 392. Serine 367 acts as the Charge relay system in catalysis.

The protein belongs to the peptidase S1 family. In terms of tissue distribution, highest expression in lung and tongue. Also expressed in brain, colon, heart and liver. Isoform 1 is the predominant form in tongue whereas both isoforms are expressed in similar amounts in lung. At the cellular level, expression is confined to epithelial cells within the cleft of the circumvallate papillae extending into the ducts of the minor salivary glands, the respiratory epithelium of the nasal cavity and tear gland ducts.

The protein resides in the membrane. The chain is Transmembrane protease serine 11G (Tmprss11g) from Rattus norvegicus (Rat).